The following is a 173-amino-acid chain: Copper transport protein ctr5 (173 aa).

Residues 1 to 54 (MSLSKMSMSGMSGMGMGSSSNSSAATCRMSMLWNWYIHDSCFLAKSWHINTGNK) are Extracellular-facing. The chain crosses the membrane as a helical span at residues 55-75 (FAGSIIGIFFFAVAIEGLSLV). Over 76 to 135 (QRMFDRWIVAHSNGKTLSGPLRIFFPSSTVHVTVWQQLIRAAMYSSFYLSATILMLIVMS) the chain is Cytoplasmic. The chain crosses the membrane as a helical span at residues 136–156 (FNGYAILFGFVGAWIGFFLFA). The Extracellular portion of the chain corresponds to 157-173 (SDTYGTPSTGTGCCESR).

It belongs to the copper transporter (Ctr) (TC 1.A.56) family. SLC31A subfamily. As to quaternary structure, interacts with ctr4.

It is found in the membrane. Its function is as follows. Required for high affinity copper (probably reduced Cu I) transport into the cell. The polypeptide is Copper transport protein ctr5 (ctr5) (Schizosaccharomyces pombe (strain 972 / ATCC 24843) (Fission yeast)).